The chain runs to 406 residues: Acetylornithine aminotransferase (406 aa).

Residues 113–114 and Phe-145 each bind pyridoxal 5'-phosphate; that span reads GT. Residue Arg-148 coordinates N(2)-acetyl-L-ornithine. Position 233–236 (233–236) interacts with pyridoxal 5'-phosphate; it reads DEIQ. N6-(pyridoxal phosphate)lysine is present on Lys-262. Ser-290 contributes to the N(2)-acetyl-L-ornithine binding site. Position 291 (Thr-291) interacts with pyridoxal 5'-phosphate.

Belongs to the class-III pyridoxal-phosphate-dependent aminotransferase family. ArgD subfamily. As to quaternary structure, homodimer. Pyridoxal 5'-phosphate serves as cofactor.

The protein localises to the cytoplasm. It carries out the reaction N(2)-acetyl-L-ornithine + 2-oxoglutarate = N-acetyl-L-glutamate 5-semialdehyde + L-glutamate. The protein operates within amino-acid biosynthesis; L-arginine biosynthesis; N(2)-acetyl-L-ornithine from L-glutamate: step 4/4. This is Acetylornithine aminotransferase from Leptospira interrogans serogroup Icterohaemorrhagiae serovar Lai (strain 56601).